Consider the following 52-residue polypeptide: Conotoxin Cal6.3b (52 aa).

The propeptide occupies 1-4 (KKKR). Cystine bridges form between C12-C23, C15-C27, and C22-C30. Q50 is modified (glutamine amide).

In terms of tissue distribution, expressed by the venom duct.

It is found in the secreted. In terms of biological role, probable neurotoxin with unknown target. Possibly targets ion channels. The protein is Conotoxin Cal6.3b of Californiconus californicus (California cone).